We begin with the raw amino-acid sequence, 687 residues long: Variant-specific surface protein VSP4A1 (687 aa).

Residues 1–14 (MLLTAFYVVLGSFA) form the signal peptide. The Extracellular portion of the chain corresponds to 15-660 (APCQQDGDHI…SGLSTGAIAG (646 aa)). The chain crosses the membrane as a helical span at residues 661-681 (ISVAAIVVVGGLVGFLCWWFI). The Cytoplasmic segment spans residues 682–687 (CRGKAQ).

Belongs to the Giardia variant surface protein family. O-glycosylated. The major glycan is a trisaccharide with Glc at the reducing terminus. Post-translationally, palmitoylated.

It is found in the cell membrane. The sequence is that of Variant-specific surface protein VSP4A1 from Giardia intestinalis (Giardia lamblia).